The following is a 153-amino-acid chain: Deoxyuridine 5'-triphosphate nucleotidohydrolase (153 aa).

Positions 75, 88, 91, 94, 99, 143, 148, and 149 each coordinate dUMP.

This sequence belongs to the dUTPase family. Homotrimer. Requires Mg(2+) as cofactor.

The catalysed reaction is dUTP + H2O = dUMP + diphosphate + H(+). The protein operates within pyrimidine metabolism; dUMP biosynthesis; dUMP from dCTP (dUTP route): step 2/2. Its function is as follows. Involved in nucleotide metabolism via production of dUMP, the immediate precursor of thymidine nucleotides, and decreases the intracellular concentration of dUTP so that uracil cannot be incorporated into DNA. This Eremothecium gossypii (strain ATCC 10895 / CBS 109.51 / FGSC 9923 / NRRL Y-1056) (Yeast) protein is Deoxyuridine 5'-triphosphate nucleotidohydrolase (DUT1).